The following is a 251-amino-acid chain: Zinc import ATP-binding protein ZnuC (251 aa).

The 216-residue stretch at 5 to 220 (VSLENVSVSF…PEFISMFGPR (216 aa)) folds into the ABC transporter domain. 37–44 (GPNGAGKS) contributes to the ATP binding site.

It belongs to the ABC transporter superfamily. Zinc importer (TC 3.A.1.15.5) family. In terms of assembly, the complex is composed of two ATP-binding proteins (ZnuC), two transmembrane proteins (ZnuB) and a solute-binding protein (ZnuA).

The protein localises to the cell inner membrane. It catalyses the reaction Zn(2+)(out) + ATP(in) + H2O(in) = Zn(2+)(in) + ADP(in) + phosphate(in) + H(+)(in). In terms of biological role, part of the ABC transporter complex ZnuABC involved in zinc import. Responsible for energy coupling to the transport system. The chain is Zinc import ATP-binding protein ZnuC from Shigella dysenteriae serotype 1 (strain Sd197).